The primary structure comprises 207 residues: Vexin (207 aa).

Residues Leu55 to Ser102 are disordered. Positions Leu58–Arg72 are enriched in basic and acidic residues.

It belongs to the vexin family.

The protein resides in the cell membrane. Its subcellular location is the nucleus. Required for neurogenesis in the neural plate and retina. Strongly cooperates with neural bHLH factors to promote neurogenesis. In Pongo abelii (Sumatran orangutan), this protein is Vexin.